The sequence spans 72 residues: Thiostrepton (72 aa).

The propeptide occupies 1–55 (MDATAIHERWSVMSNASIGQEIGVEGLTGLDVDALEISDYVDETLLDGEDLTVTM). A cross-link (4-(1-hydroxyethyl)-7-isoleucino-2-(threonin-O3-ylcarbonyl)-7,8-dihydroquinolin-8-ol (Ile-Thr)) is located at residues 56-67 (IASASCTTCICT). Ser58 bears the 2,3-didehydroalanine (Ser) mark. Residues 60–61 (SC) constitute a cross-link (thiazole-4-carboxylic acid (Ser-Cys)). A cross-link (5-amino-piperideine-2,5-dicarboxylic acid (Ser-Cys) (with S-69)) is located at residues 60-68 (SCTTCICTC). A cross-link (5-amino-piperideine-2,5-dicarboxylic acid (Ser-Ser) (with C-68)) is located at residues 60–69 (SCTTCICTCS). Thr63 is subject to (Z)-2,3-didehydrobutyrine. The (4S)-thiazoline-4-carboxylic acid (Thr-Cys) cross-link spans 63–64 (TC). The residue at position 65 (Ile65) is a (3S,4R)-3,4-dihydroxyisoleucine. The thiazole-4-carboxylic acid (Ile-Cys) cross-link spans 65-66 (IC). The thiazole-4-carboxylic acid (Thr-Cys) cross-link spans 67 to 68 (TC). A cross-link (thiazole-4-carboxylic acid (Ser-Cys)) is located at residues 69-70 (SC). A 2,3-didehydroalanine (Ser) mark is found at Ser71 and Ser72. Ser72 carries the post-translational modification Serine amide.

The protein belongs to the thiocillin family. Maturation of thiazole and oxazole containing antibiotics involves the enzymatic condensation of a Cys, Ser or Thr with the alpha-carbonyl of the preceding amino acid to form a thioether or ether bond, then dehydration to form a double bond with the alpha-amino nitrogen. Thiazoline or oxazoline ring are dehydrogenated to form thiazole or oxazole rings. Post-translationally, maturation of pyridinyl containing antibiotics involves the cross-linking of a Ser and a Cys-Ser pair usually separated by 7 or 8 residues along the peptide chain. The Ser residues are dehydrated to didehydroalanines, then bonded between their beta carbons. The alpha carbonyl of the Cys condenses with alpha carbon of the first Ser to form a pyridinyl ring. The ring may be multiply dehydrogenated to form a pyridine ring with loss of the amino nitrogen of the first Ser. In terms of processing, the amidation of Ser-72 probably does not occur by the same mechanism, oxidative cleavage of glycine, as in eukaryotes. The structure of the 2,3-didehydrobutyrin is shown to be Z-isomer.

It is found in the secreted. Functionally, has bacteriocidal activity. Inhibits bacterial protein biosynthesis by acting on the elongation factor Tu (EF-Tu). This is Thiostrepton (tpdA) from Streptomyces azureus.